A 370-amino-acid polypeptide reads, in one-letter code: Putative F-box protein At1g47390 (370 aa).

Residues 1–47 form the F-box domain; it reads MAPEEKLPCELIEEILSRVPPESLVRFRTVSKKWNALFDDKMFINNH.

This is Putative F-box protein At1g47390 from Arabidopsis thaliana (Mouse-ear cress).